We begin with the raw amino-acid sequence, 630 residues long: Long-chain-fatty-acid--AMP ligase FadD32 (630 aa).

ATP is bound by residues 187 to 192, serine 342, alanine 346, aspartate 469, and arginine 483; that span reads TSGSTR.

The protein belongs to the ATP-dependent AMP-binding enzyme family. As to quaternary structure, monomer.

The enzyme catalyses a long-chain fatty acid + holo-[ACP] + ATP = a long-chain fatty acyl-[ACP] + AMP + diphosphate. It carries out the reaction decanoate + ATP + H(+) = decanoyl-AMP + diphosphate. The catalysed reaction is dodecanoate + ATP + H(+) = dodecanoyl-AMP + diphosphate. It catalyses the reaction tetradecanoate + ATP + H(+) = tetradecanoyl-AMP + diphosphate. Its pathway is lipid metabolism; mycolic acid biosynthesis. With respect to regulation, the acyl-AMP ligase activity is inhibited by the alkylphosphate ester of AMP, adenosine 50-dodecylphosphate (AMPC12). Also inhibited by eicosyl-AMP (AMPC20). Functionally, involved in the biosynthesis of mycolic acids. Catalyzes the activation of long-chain fatty acids as acyl-adenylates (acyl-AMP), which are then transferred to the phosphopantetheine arm of the polyketide synthase Pks13 for further chain extension. Can use decanoate (C10), dodecanoate (C12) and tetradecanoate (C14). The polypeptide is Long-chain-fatty-acid--AMP ligase FadD32 (Mycolicibacterium smegmatis (strain ATCC 700084 / mc(2)155) (Mycobacterium smegmatis)).